We begin with the raw amino-acid sequence, 57 residues long: Protein Ric1 (57 aa).

Helical transmembrane passes span 8-28 and 34-54; these read IPRL…QVGC and INCL…VYIL.

Belongs to the UPF0057 (PMP3) family.

Its subcellular location is the membrane. The chain is Protein Ric1 (RIC1) from Phytophthora infestans (Potato late blight agent).